A 168-amino-acid polypeptide reads, in one-letter code: 3-hydroxyacyl-[acyl-carrier-protein] dehydratase FabZ (168 aa).

His-54 is an active-site residue.

Belongs to the thioester dehydratase family. FabZ subfamily.

It is found in the cytoplasm. The catalysed reaction is a (3R)-hydroxyacyl-[ACP] = a (2E)-enoyl-[ACP] + H2O. Its function is as follows. Involved in unsaturated fatty acids biosynthesis. Catalyzes the dehydration of short chain beta-hydroxyacyl-ACPs and long chain saturated and unsaturated beta-hydroxyacyl-ACPs. In Yersinia enterocolitica serotype O:8 / biotype 1B (strain NCTC 13174 / 8081), this protein is 3-hydroxyacyl-[acyl-carrier-protein] dehydratase FabZ.